We begin with the raw amino-acid sequence, 456 residues long: Dolichyl-diphosphooligosaccharide--protein glycosyltransferase 48 kDa subunit (456 aa).

The N-terminal stretch at 1–42 (MGYFRCARAGSFGRRRKMEPSTAARAWALFWLLLPLLGAVCA) is a signal peptide. The Lumenal portion of the chain corresponds to 43–427 (SGPRTLVLLD…YERFIPSAYP (385 aa)). The chain crosses the membrane as a helical span at residues 428–447 (YYASAFSMMLGLFIFSIVFL). Over 448–456 (HMKEKEKSD) the chain is Cytoplasmic.

It belongs to the DDOST 48 kDa subunit family. In terms of assembly, component of the oligosaccharyltransferase (OST) complex. OST exists in two different complex forms which contain common core subunits RPN1, RPN2, OST48, OST4, DAD1 and TMEM258, either STT3A or STT3B as catalytic subunits, and form-specific accessory subunits. STT3A complex assembly occurs through the formation of 3 subcomplexes. Subcomplex 1 contains RPN1 and TMEM258, subcomplex 2 contains the STT3A-specific subunits STT3A, DC2/OSTC, and KCP2 as well as the core subunit OST4, and subcomplex 3 contains RPN2, DAD1, and OST48. The STT3A complex can form stable complexes with the Sec61 complex or with both the Sec61 and TRAP complexes. Interacts with SMIM22.

The protein resides in the endoplasmic reticulum membrane. The protein operates within protein modification; protein glycosylation. In terms of biological role, subunit of the oligosaccharyl transferase (OST) complex that catalyzes the initial transfer of a defined glycan (Glc(3)Man(9)GlcNAc(2) in eukaryotes) from the lipid carrier dolichol-pyrophosphate to an asparagine residue within an Asn-X-Ser/Thr consensus motif in nascent polypeptide chains, the first step in protein N-glycosylation. N-glycosylation occurs cotranslationally and the complex associates with the Sec61 complex at the channel-forming translocon complex that mediates protein translocation across the endoplasmic reticulum (ER). All subunits are required for a maximal enzyme activity. Required for the assembly of both SST3A- and SS3B-containing OST complexes. The chain is Dolichyl-diphosphooligosaccharide--protein glycosyltransferase 48 kDa subunit from Homo sapiens (Human).